Here is a 499-residue protein sequence, read N- to C-terminus: Lysine--tRNA ligase (499 aa).

Mg(2+) contacts are provided by Glu-410 and Glu-417.

The protein belongs to the class-II aminoacyl-tRNA synthetase family. In terms of assembly, homodimer. Mg(2+) is required as a cofactor.

It is found in the cytoplasm. The enzyme catalyses tRNA(Lys) + L-lysine + ATP = L-lysyl-tRNA(Lys) + AMP + diphosphate. This chain is Lysine--tRNA ligase (lysS), found in Bacillus subtilis (strain 168).